The following is a 186-amino-acid chain: Small ribosomal subunit protein uS5 (186 aa).

Residues 20 to 83 form the S5 DRBM domain; sequence FVDKLVHINR…EAAKRDMIFV (64 aa).

It belongs to the universal ribosomal protein uS5 family. Part of the 30S ribosomal subunit. Contacts proteins S4 and S8.

Functionally, with S4 and S12 plays an important role in translational accuracy. Located at the back of the 30S subunit body where it stabilizes the conformation of the head with respect to the body. The chain is Small ribosomal subunit protein uS5 from Brucella anthropi (strain ATCC 49188 / DSM 6882 / CCUG 24695 / JCM 21032 / LMG 3331 / NBRC 15819 / NCTC 12168 / Alc 37) (Ochrobactrum anthropi).